The chain runs to 202 residues: MTAIGEVENPTVVQRPTEASKVKEQAPATDKKPRAPKEKKPKSAKAVTHPPYFQMIKEALLALNEKGGSSPYAVAKYMEDKHKDELPANFRKILGLQLKNSAAKGKLIKIKASYKLSEAGKKETTTKTSTKKLPKADSKKKPRSTRATATAAKKTEVPKKAKATPKPKKVGAKRTRKSTPAKAKQPKSIKSPAAKRAKKIAV.

Disordered regions lie at residues 1 to 50 (MTAI…VTHP) and 114 to 202 (YKLS…KIAV). Positions 18 to 38 (EASKVKEQAPATDKKPRAPKE) are enriched in basic and acidic residues. Positions 48–118 (THPPYFQMIK…KIKASYKLSE (71 aa)) constitute an H15 domain. The segment covering 160–202 (KAKATPKPKKVGAKRTRKSTPAKAKQPKSIKSPAAKRAKKIAV) has biased composition (basic residues).

Belongs to the histone H1/H5 family.

The protein resides in the nucleus. Its subcellular location is the chromosome. Histones H1 are necessary for the condensation of nucleosome chains into higher-order structures. The chain is Histone H1 from Solanum pennellii (Tomato).